A 529-amino-acid chain; its full sequence is Bifunctional purine biosynthesis protein PurH (529 aa).

In terms of domain architecture, MGS-like spans 1 to 148; sequence MNNARPIRRA…KNHKDTTIIV (148 aa).

Belongs to the PurH family.

It carries out the reaction (6R)-10-formyltetrahydrofolate + 5-amino-1-(5-phospho-beta-D-ribosyl)imidazole-4-carboxamide = 5-formamido-1-(5-phospho-D-ribosyl)imidazole-4-carboxamide + (6S)-5,6,7,8-tetrahydrofolate. It catalyses the reaction IMP + H2O = 5-formamido-1-(5-phospho-D-ribosyl)imidazole-4-carboxamide. The protein operates within purine metabolism; IMP biosynthesis via de novo pathway; 5-formamido-1-(5-phospho-D-ribosyl)imidazole-4-carboxamide from 5-amino-1-(5-phospho-D-ribosyl)imidazole-4-carboxamide (10-formyl THF route): step 1/1. It participates in purine metabolism; IMP biosynthesis via de novo pathway; IMP from 5-formamido-1-(5-phospho-D-ribosyl)imidazole-4-carboxamide: step 1/1. The polypeptide is Bifunctional purine biosynthesis protein PurH (Shewanella halifaxensis (strain HAW-EB4)).